A 635-amino-acid chain; its full sequence is MINISFPDGSIKQFAKNITAYEVANAISMSLAKAAMVAEINGELQDLSIVIDNDCKLRILTAKDPECLEIIRHDAAHLTAEAVKELFPETQVTIGPAIENGYYYDFARDTPFTTDDLAVIEAKMQELSQKNEQVTRELWDRDKAVEFFKSIGEHYKAEIIASIPAGEPITLYRQGNFIDLCRGPHAPSTGVVKHFKLMKVAGAYWRGDSRNEMLQRIYGTAWATKEQLDSYLLMLEEAEKRDHRKLGRELDLFHFQEEAQGMVFWHDKGWSIYNTIEQYIRKKIRKNGYTEVKTPVLVDKSLWEASGHWEKFRDDMFALETDDKTLALKPMNCPCHVQIFKQGIKSYRDLPLRMSEFGLCHRNEASGALHGLMRVRSLVQDDAHIFCAAEQITDETVSFCKLLTEVYKDFGFTDIKVKFSDRPEIRAGSNEVWDKAENALKEAVEQAGFTYTLNPGEGAFYGPKLEFVLTDAIGRQWQCGTLQMDFVLPERLDASYVAASGEKKRPVMLHRAILGSLERFIGILIEEYAGRFPLWLAPVQVAIATITSDLNDYALEVQKALIDNGVRTDFNISPDKINYKIREFSNQKIPMIAVIGKQEQKNKQVAIRRLGTTDQEVLSVEQLIAVVKEENEKYL.

A TGS domain is found at 1–61; it reads MINISFPDGS…DNDCKLRILT (61 aa). A catalytic region spans residues 242-533; that stretch reads DHRKLGRELD…LIEEYAGRFP (292 aa). Positions 333, 384, and 510 each coordinate Zn(2+).

The protein belongs to the class-II aminoacyl-tRNA synthetase family. In terms of assembly, homodimer. Zn(2+) serves as cofactor.

It is found in the cytoplasm. It carries out the reaction tRNA(Thr) + L-threonine + ATP = L-threonyl-tRNA(Thr) + AMP + diphosphate + H(+). Functionally, catalyzes the attachment of threonine to tRNA(Thr) in a two-step reaction: L-threonine is first activated by ATP to form Thr-AMP and then transferred to the acceptor end of tRNA(Thr). Also edits incorrectly charged L-seryl-tRNA(Thr). This is Threonine--tRNA ligase from Rickettsia peacockii (strain Rustic).